Reading from the N-terminus, the 209-residue chain is MIGLSEIELAGIAGAYFLGSLSSAIIVCRLMGLGDPRQEGSGNPGATNVKRLYGSKPAAITLLGDMLKGVVPVALANMAGWSPLAIILVGFASFIGHLYPIFFGFRGGKGVATMLGVMFGLSLPIGAAVAGTWLFVAKVLKISSLSALIATALAPLYIYLLADGNMAWVSVTAIMTLILFWRHRSNIERLLKGEEDLIKKQPGASDPKE.

5 consecutive transmembrane segments (helical) span residues 7–27 (IELAGIAGAYFLGSLSSAIIV), 85–105 (AIILVGFASFIGHLYPIFFGF), 117–137 (VMFGLSLPIGAAVAGTWLFVA), 142–162 (ISSLSALIATALAPLYIYLLA), and 166–183 (MAWVSVTAIMTLILFWRH).

Belongs to the PlsY family. In terms of assembly, probably interacts with PlsX.

It localises to the cell inner membrane. It catalyses the reaction an acyl phosphate + sn-glycerol 3-phosphate = a 1-acyl-sn-glycero-3-phosphate + phosphate. The protein operates within lipid metabolism; phospholipid metabolism. Functionally, catalyzes the transfer of an acyl group from acyl-phosphate (acyl-PO(4)) to glycerol-3-phosphate (G3P) to form lysophosphatidic acid (LPA). This enzyme utilizes acyl-phosphate as fatty acyl donor, but not acyl-CoA or acyl-ACP. This Hydrogenovibrio crunogenus (strain DSM 25203 / XCL-2) (Thiomicrospira crunogena) protein is Glycerol-3-phosphate acyltransferase.